The chain runs to 270 residues: Abhydrolase domain-containing protein C22H12.03 (270 aa).

In terms of domain architecture, AB hydrolase-1 spans Pro21–Pro257. Catalysis depends on charge relay system residues Ser95, Glu190, and His250.

It belongs to the AB hydrolase superfamily.

The protein resides in the mitochondrion. This is Abhydrolase domain-containing protein C22H12.03 from Schizosaccharomyces pombe (strain 972 / ATCC 24843) (Fission yeast).